Consider the following 1083-residue polypeptide: MSWDDAIEGVDRDTPGGRMPRAWNVAARLRAANDDISHAHVADGVPTYAELHCLSDFSFLRGASSAEQLFARAQHCGYSALAITDECSLAGIVRGLEASRVTGVRLIVGSEFTLIDGTRFVLLVENAHGYPQVCGLVTTARRAASKGAYRLGRADVEAQFRDVAPGVFALWLPGVQPQAEQGAWLQQVFGERAFLAVELHREQDDGARLQVLQALAQQLGMTAVASGDVHMAQRRERIVQDTLTAIRHTLPLAECGAHLFRNGERHLRTRRALGNIYPDALLQAAVALAQRCTFDISKISYTYPRELVPEGHTPTSYLRQLTEAGIRKRWPGGITAKVREDIEKELALIALKKYEAFFLTVQDVVRFAREQNILCQGRGSSANSAVCYALGITAVNPDETRLLMARFLSEKRDEPPDIDVDFEHERREEVLQYVYRKYGRERAALAATVICYRGKSAVRDVAKAFGLPPDQIALLANCYGWGNGETPMEQRIEEAGFDLANPLINKILLVTEHLRDHPRHLSQHVGGFVISDEPLSLLVPVENAAMADRTIIQWDKDDLETMKLLKVDCLALGMLTCIRKTLDLVRGHRGRDYSIATLPGEDLPTYKMIQRADTVGVFQIESRAQMAMLPRLKPAEFYDLVIEVAIVRPGPIQGDMVHPYLRRRQGREDVSYPSPAVEDILKPTLGVPLFQEQVMELLMHAADYTESEADNLRRSMAAWRRGGDMEQHRMRVRERMQGKGYASTFIDQIFEQIKGFGSYGFPQSHAASFAKLVYASCWLKRHEPAAFACGLLNAQPMGFYSASQIVQDARRGSPERERVEVLPVDVVHSDWDNTLVGGRPWRSAADPGEQPAIRLGMRQVAGLSDVVAQRIVAARTQRAFADIGDLCLRAALDEKACLALAEAGALQGMVGNRNAARWAMAGVEARRPLLPGSPEERPVAFEAPHAGEEILADYRSVGLSLRQHPMALLRPQMRQRRILGLRDLQGRPHGSGVHVAGLVTQRQRPATAKGTIFVTLEDEHGMINVIVWSHLALRRRRALLESRLLAVRGRWERVDGVEHLIAGDLHDLSDLLGDMQLPSRDFH.

The protein belongs to the DNA polymerase type-C family. DnaE2 subfamily.

The protein localises to the cytoplasm. It catalyses the reaction DNA(n) + a 2'-deoxyribonucleoside 5'-triphosphate = DNA(n+1) + diphosphate. Functionally, DNA polymerase involved in damage-induced mutagenesis and translesion synthesis (TLS). It is not the major replicative DNA polymerase. The polypeptide is Error-prone DNA polymerase (Xanthomonas oryzae pv. oryzae (strain KACC10331 / KXO85)).